An 833-amino-acid polypeptide reads, in one-letter code: Leucine--tRNA ligase (833 aa).

The 'HIGH' region motif lies at 41 to 52; sequence PYPSGAGLHVGH. Positions 610–614 match the 'KMSKS' region motif; sequence KMSKS. Position 613 (Lys-613) interacts with ATP.

Belongs to the class-I aminoacyl-tRNA synthetase family.

Its subcellular location is the cytoplasm. The enzyme catalyses tRNA(Leu) + L-leucine + ATP = L-leucyl-tRNA(Leu) + AMP + diphosphate. This chain is Leucine--tRNA ligase, found in Streptococcus pyogenes serotype M6 (strain ATCC BAA-946 / MGAS10394).